Reading from the N-terminus, the 428-residue chain is MTPPCLNCSIFPGALSPNASRSPLVCNISEFKWPYQPEDLNLTDEALRLKYLGPQQMKQFVPICVTYLLIFVVGTLGNGLTCTVILRNKTMRTPTNFYLFSLAVSDMLVLLVGLPLELYEMQQNYPFQLGASACYFRILLLETVCLASVLNVTALSVERYVAVVRPLQAKSVMTRAHVRRMVGAIWVLATLFSLPNTSLHGLSQLTVPCRGPVPDSAICSLVGPMDFYKLVVLTTALLFFCLPMVTISVLYLLIGLRLRRERMLLQVEVKGRKTAATQETSHRRIQLQDRGRRQVTKMLFALVVVFGICWAPFHADRIMWSLVYGHSTEGLHLAYQCVHIASGIFFYLGSAANPVLYSLMSTRFRETFLQALGLGTQCCHRRQPYHGSHNHIRLTTGSTLCDVGHRNSRDEPLAVNEDPGCQQETDPS.

The Extracellular portion of the chain corresponds to 1–59 (MTPPCLNCSIFPGALSPNASRSPLVCNISEFKWPYQPEDLNLTDEALRLKYLGPQQMKQ). 2 N-linked (GlcNAc...) asparagine glycosylation sites follow: N27 and N41. A helical membrane pass occupies residues 60–80 (FVPICVTYLLIFVVGTLGNGL). At 81–96 (TCTVILRNKTMRTPTN) the chain is on the cytoplasmic side. A helical membrane pass occupies residues 97–117 (FYLFSLAVSDMLVLLVGLPLE). Over 118–137 (LYEMQQNYPFQLGASACYFR) the chain is Extracellular. A disulfide bridge links C134 with C219. The helical transmembrane segment at 138–158 (ILLLETVCLASVLNVTALSVE) threads the bilayer. Over 159–181 (RYVAVVRPLQAKSVMTRAHVRRM) the chain is Cytoplasmic. The chain crosses the membrane as a helical span at residues 182 to 202 (VGAIWVLATLFSLPNTSLHGL). Over 203-235 (SQLTVPCRGPVPDSAICSLVGPMDFYKLVVLTT) the chain is Extracellular. Residues 236 to 256 (ALLFFCLPMVTISVLYLLIGL) traverse the membrane as a helical segment. The Cytoplasmic segment spans residues 257–294 (RLRRERMLLQVEVKGRKTAATQETSHRRIQLQDRGRRQ). The helical transmembrane segment at 295–315 (VTKMLFALVVVFGICWAPFHA) threads the bilayer. The Extracellular portion of the chain corresponds to 316 to 339 (DRIMWSLVYGHSTEGLHLAYQCVH). A helical membrane pass occupies residues 340-360 (IASGIFFYLGSAANPVLYSLM). Residues 361–428 (STRFRETFLQ…PGCQQETDPS (68 aa)) are Cytoplasmic-facing.

It belongs to the G-protein coupled receptor 1 family. In terms of tissue distribution, ubiquitously expressed.

It localises to the cell membrane. In terms of biological role, receptor for the neuromedin-U and neuromedin-S neuropeptides. The protein is Neuromedin-U receptor 1 (Nmur1) of Mus musculus (Mouse).